The chain runs to 226 residues: Lipoprotein-releasing system ATP-binding protein LolD (226 aa).

An ABC transporter domain is found at 5–225 (FALSNISKFF…EINSCMLSSV (221 aa)). 40–47 (GRSGSGKS) provides a ligand contact to ATP.

This sequence belongs to the ABC transporter superfamily. Lipoprotein translocase (TC 3.A.1.125) family. In terms of assembly, the complex is composed of two ATP-binding proteins (LolD) and two transmembrane proteins (LolC and LolE).

The protein resides in the cell inner membrane. In terms of biological role, part of the ABC transporter complex LolCDE involved in the translocation of mature outer membrane-directed lipoproteins, from the inner membrane to the periplasmic chaperone, LolA. Responsible for the formation of the LolA-lipoprotein complex in an ATP-dependent manner. The protein is Lipoprotein-releasing system ATP-binding protein LolD of Ehrlichia canis (strain Jake).